A 379-amino-acid chain; its full sequence is EP300-interacting inhibitor of differentiation 3 (379 aa).

Residues 32–58 (LKQVEEEEEVEALKVEVAAASDTESDT) adopt a coiled-coil conformation.

The protein belongs to the NSE4 family. Component of the SMC5-SMC6 complex which consists at least of SMC5, SMC6, NSMCE2, NSMCE1, NSMCE4A or EID3 and NSMCE3. NSMCE1, NSMCE4A or EID3 and NSMCE3 probably form a subcomplex that bridges the head domains of the SMC5:SMC6 heterodimer. Homodimer, and heterodimer with EID2. Interacts with the C-terminal region of CREBBP.

It is found in the nucleus. Its subcellular location is the cytoplasm. The protein resides in the chromosome. It localises to the telomere. Its function is as follows. Tissue-specific component of the SMC5-SMC6 complex, a complex involved in repair of DNA double-strand breaks by homologous recombination. The complex may promote sister chromatid homologous recombination by recruiting the SMC1-SMC3 cohesin complex to double-strand breaks. The complex is required for telomere maintenance via recombination and mediates sumoylation of shelterin complex (telosome) components. In terms of biological role, acts as a repressor of nuclear receptor-dependent transcription possibly by interfering with CREBBP-dependent coactivation. May function as a coinhibitor of other CREBBP/EP300-dependent transcription factors. In Bos taurus (Bovine), this protein is EP300-interacting inhibitor of differentiation 3.